Reading from the N-terminus, the 81-residue chain is Photosystem I iron-sulfur center (81 aa).

4Fe-4S ferredoxin-type domains lie at 2–31 (SHSV…MVPW) and 37–68 (GQIA…VRVY). Residues C11, C14, C17, C21, C48, C51, C54, and C58 each coordinate [4Fe-4S] cluster.

In terms of assembly, the cyanobacterial PSI reaction center is composed of one copy each of PsaA,B,C,D,E,F,I,J,K,L,M and X, and forms trimeric complexes. [4Fe-4S] cluster is required as a cofactor.

The protein localises to the cellular thylakoid membrane. The catalysed reaction is reduced [plastocyanin] + hnu + oxidized [2Fe-2S]-[ferredoxin] = oxidized [plastocyanin] + reduced [2Fe-2S]-[ferredoxin]. Its function is as follows. Apoprotein for the two 4Fe-4S centers FA and FB of photosystem I (PSI); essential for photochemical activity. FB is the terminal electron acceptor of PSI, donating electrons to ferredoxin. The C-terminus interacts with PsaA/B/D and helps assemble the protein into the PSI complex. Required for binding of PsaD and PsaE to PSI. PSI is a plastocyanin/cytochrome c6-ferredoxin oxidoreductase, converting photonic excitation into a charge separation, which transfers an electron from the donor P700 chlorophyll pair to the spectroscopically characterized acceptors A0, A1, FX, FA and FB in turn. The protein is Photosystem I iron-sulfur center of Trichodesmium erythraeum (strain IMS101).